Reading from the N-terminus, the 289-residue chain is Ribonuclease Z (289 aa).

7 residues coordinate Zn(2+): His-63, His-65, Asp-67, His-68, His-143, Asp-197, and His-255. Catalysis depends on Asp-67, which acts as the Proton acceptor.

Belongs to the RNase Z family. In terms of assembly, homodimer. Zn(2+) serves as cofactor.

The catalysed reaction is Endonucleolytic cleavage of RNA, removing extra 3' nucleotides from tRNA precursor, generating 3' termini of tRNAs. A 3'-hydroxy group is left at the tRNA terminus and a 5'-phosphoryl group is left at the trailer molecule.. Zinc phosphodiesterase, which displays some tRNA 3'-processing endonuclease activity. Probably involved in tRNA maturation, by removing a 3'-trailer from precursor tRNA. This chain is Ribonuclease Z, found in Azobacteroides pseudotrichonymphae genomovar. CFP2.